The chain runs to 586 residues: Phosphomethylpyrimidine synthase (586 aa).

Disordered regions lie at residues 38 to 59 and 92 to 114; these read IELS…TSGP and GREI…VFPQ. Basic and acidic residues predominate over residues 92–102; it reads GREIKPEDDGV. Residues N193, M222, Y251, H287, 307–309, 348–351, and E387 each bind substrate; these read SRG and DGLR. H391 lines the Zn(2+) pocket. Y414 serves as a coordination point for substrate. H455 lines the Zn(2+) pocket. The [4Fe-4S] cluster site is built by C535, C538, and C543.

The protein belongs to the ThiC family. It depends on [4Fe-4S] cluster as a cofactor.

It carries out the reaction 5-amino-1-(5-phospho-beta-D-ribosyl)imidazole + S-adenosyl-L-methionine = 4-amino-2-methyl-5-(phosphooxymethyl)pyrimidine + CO + 5'-deoxyadenosine + formate + L-methionine + 3 H(+). Its pathway is cofactor biosynthesis; thiamine diphosphate biosynthesis. Its function is as follows. Catalyzes the synthesis of the hydroxymethylpyrimidine phosphate (HMP-P) moiety of thiamine from aminoimidazole ribotide (AIR) in a radical S-adenosyl-L-methionine (SAM)-dependent reaction. The protein is Phosphomethylpyrimidine synthase of Bacillus cytotoxicus (strain DSM 22905 / CIP 110041 / 391-98 / NVH 391-98).